We begin with the raw amino-acid sequence, 471 residues long: Arginine biosynthesis bifunctional protein ArgJ, mitochondrial (471 aa).

Substrate contacts are provided by Thr190, Lys216, Thr239, Glu327, Asn466, and Ser471. Thr239 functions as the Nucleophile in the catalytic mechanism.

The protein belongs to the ArgJ family. In terms of assembly, heterodimer of an alpha and a beta chain. The alpha and beta chains are autoproteolytically processed from a single precursor protein within the mitochondrion.

The protein resides in the mitochondrion matrix. The enzyme catalyses N(2)-acetyl-L-ornithine + L-glutamate = N-acetyl-L-glutamate + L-ornithine. The catalysed reaction is L-glutamate + acetyl-CoA = N-acetyl-L-glutamate + CoA + H(+). The protein operates within amino-acid biosynthesis; L-arginine biosynthesis; L-ornithine and N-acetyl-L-glutamate from L-glutamate and N(2)-acetyl-L-ornithine (cyclic): step 1/1. Its pathway is amino-acid biosynthesis; L-arginine biosynthesis; N(2)-acetyl-L-ornithine from L-glutamate: step 1/4. Functionally, catalyzes two activities which are involved in the cyclic version of arginine biosynthesis: the synthesis of acetylglutamate from glutamate and acetyl-CoA, and of ornithine by transacetylation between acetylornithine and glutamate. This is Arginine biosynthesis bifunctional protein ArgJ, mitochondrial from Coprinopsis cinerea (strain Okayama-7 / 130 / ATCC MYA-4618 / FGSC 9003) (Inky cap fungus).